Here is a 200-residue protein sequence, read N- to C-terminus: Cysteine dioxygenase type 1 (200 aa).

Fe cation is bound by residues H86, H88, and H140. A cross-link (3'-(S-cysteinyl)-tyrosine (Cys-Tyr)) is located at residues 93-157; sequence CFLKMLQGNL…TEPAVSLHLY (65 aa).

This sequence belongs to the cysteine dioxygenase family. Monomer. The cofactor is Fe cation. Ni(2+) is required as a cofactor. It depends on Zn(2+) as a cofactor. Post-translationally, the thioether cross-link between Cys-93 and Tyr-157 plays a structural role through stabilizing the Fe(2+) ion, and prevents the production of highly damaging free hydroxyl radicals by holding the oxygen radical via hydroxyl hydrogen.

It carries out the reaction L-cysteine + O2 = 3-sulfino-L-alanine + H(+). Its pathway is organosulfur biosynthesis; taurine biosynthesis; hypotaurine from L-cysteine: step 1/2. In terms of biological role, catalyzes the oxidation of cysteine to cysteine sulfinic acid with addition of molecular dioxygen. This is Cysteine dioxygenase type 1 (CDO1) from Bos taurus (Bovine).